The chain runs to 205 residues: Methylamine utilization protein MauD (205 aa).

A helical transmembrane segment spans residues Phe-5–Leu-25. A Thioredoxin domain is found at Pro-50 to Ser-184.

It is found in the membrane. Its pathway is one-carbon metabolism; methylamine degradation. In terms of biological role, may be specifically involved in the processing, transport, and/or maturation of the MADH beta-subunit. In Methylorubrum extorquens (strain ATCC 14718 / DSM 1338 / JCM 2805 / NCIMB 9133 / AM1) (Methylobacterium extorquens), this protein is Methylamine utilization protein MauD (mauD).